Consider the following 1090-residue polypeptide: UPF0507 protein C1Q_01007 (1090 aa).

Residues 289 to 436 form the VPS9 domain; that stretch reads FSVNQLLTDF…FEDFNKNTGN (148 aa).

This sequence belongs to the UPF0507 family.

The chain is UPF0507 protein C1Q_01007 from Saccharomyces cerevisiae (strain JAY291) (Baker's yeast).